Reading from the N-terminus, the 181-residue chain is Major urinary protein 20 (181 aa).

Positions 1–19 (MKLLVLLLCLGLTLVCVHA) are cleaved as a signal peptide. An intrachain disulfide couples cysteine 83 to cysteine 176.

It belongs to the calycin superfamily. Lipocalin family. In terms of tissue distribution, detected in urine of males but absent from female urine (at protein level).

It is found in the secreted. Functionally, male pheromone which stimulates female sexual attraction to male urinary scent and promotes a strong learned attraction to the airborne urinary odor of an individual male. Promotes spatial learning by rapidly conditioning preference for its remembered location among females and competitor males so that animals prefer to spend time in the site even when scent is absent. In addition to promoting a rapid attraction response, also elicits ultrasonic vocalizations and urinary scent marking in females which do not occur immediately after exposure. Stimulates hippocampal neurogenesis and cell proliferation in the subventricular zone in females. Promotes male aggressive behavior. Response to Mup20 is mediated by a neural circuit extending from the accessory olfactory bulb to a subset of nitric oxidase synthase-expressing neurons in the medial amygdala. As well as acting as a pheromone itself, binds most of the male pheromone, 2-sec-butyl-4,5-dihydrothiazole, in urine and is responsible for its slow release from scent marks. In Mus musculus (Mouse), this protein is Major urinary protein 20.